Reading from the N-terminus, the 98-residue chain is Cell division topological specificity factor (98 aa).

It belongs to the MinE family.

Functionally, prevents the cell division inhibition by proteins MinC and MinD at internal division sites while permitting inhibition at polar sites. This ensures cell division at the proper site by restricting the formation of a division septum at the midpoint of the long axis of the cell. The protein is Cell division topological specificity factor of Nitrosomonas eutropha (strain DSM 101675 / C91 / Nm57).